The chain runs to 416 residues: Geranyl diphosphate synthase (416 aa).

The Mg(2+) site is built by Asp-157 and Asp-161. Positions 157-161 (DDIMD) match the DDXXD motif motif.

Belongs to the FPP/GGPP synthase family. Mg(2+) serves as cofactor. Specifically expressed in the anterior midgut of male beetles, the site of aggregation pheromone biosynthesis.

The enzyme catalyses isopentenyl diphosphate + dimethylallyl diphosphate = (2E)-geranyl diphosphate + diphosphate. Its pathway is pheromone biosynthesis. Geranyl diphosphate synthase involved in pheromone biosynthesis. The polypeptide is Geranyl diphosphate synthase (Ips pini (Pine engraver beetle)).